Here is a 224-residue protein sequence, read N- to C-terminus: 7-cyano-7-deazaguanine synthase (224 aa).

9 to 19 (ISGGMDSTLCA) provides a ligand contact to ATP. Cysteine 190, cysteine 198, cysteine 201, and cysteine 204 together coordinate Zn(2+).

This sequence belongs to the QueC family. It depends on Zn(2+) as a cofactor.

It catalyses the reaction 7-carboxy-7-deazaguanine + NH4(+) + ATP = 7-cyano-7-deazaguanine + ADP + phosphate + H2O + H(+). The protein operates within purine metabolism; 7-cyano-7-deazaguanine biosynthesis. In terms of biological role, catalyzes the ATP-dependent conversion of 7-carboxy-7-deazaguanine (CDG) to 7-cyano-7-deazaguanine (preQ(0)). The sequence is that of 7-cyano-7-deazaguanine synthase from Campylobacter jejuni (strain RM1221).